The following is a 109-amino-acid chain: Guanylin (109 aa).

The N-terminal stretch at 1–21 (MNTFLFPTLCLLGVWAALAGG) is a signal peptide. Positions 22–94 (VTVKDGEFSF…LERLETIAQD (73 aa)) are excised as a propeptide. 3 cysteine pairs are disulfide-bonded: cysteine 63–cysteine 76, cysteine 98–cysteine 106, and cysteine 101–cysteine 109.

Belongs to the guanylin family.

Its subcellular location is the secreted. Functionally, endogenous activator of intestinal guanylate cyclase. It stimulates this enzyme through the same receptor binding region as the heat-stable enterotoxins. The protein is Guanylin (GUCA2A) of Sus scrofa (Pig).